The sequence spans 329 residues: ATP phosphoribosyltransferase regulatory subunit (329 aa).

Belongs to the class-II aminoacyl-tRNA synthetase family. HisZ subfamily. As to quaternary structure, heteromultimer composed of HisG and HisZ subunits.

It localises to the cytoplasm. It participates in amino-acid biosynthesis; L-histidine biosynthesis; L-histidine from 5-phospho-alpha-D-ribose 1-diphosphate: step 1/9. Its function is as follows. Required for the first step of histidine biosynthesis. May allow the feedback regulation of ATP phosphoribosyltransferase activity by histidine. In Streptococcus gordonii (strain Challis / ATCC 35105 / BCRC 15272 / CH1 / DL1 / V288), this protein is ATP phosphoribosyltransferase regulatory subunit.